Reading from the N-terminus, the 375-residue chain is Succinyl-diaminopimelate desuccinylase (375 aa).

Zn(2+) is bound at residue His66. Asp68 is a catalytic residue. Residue Asp99 participates in Zn(2+) binding. Glu133 functions as the Proton acceptor in the catalytic mechanism. The Zn(2+) site is built by Glu134, Glu162, and His348.

Belongs to the peptidase M20A family. DapE subfamily. In terms of assembly, homodimer. Requires Zn(2+) as cofactor. It depends on Co(2+) as a cofactor.

It catalyses the reaction N-succinyl-(2S,6S)-2,6-diaminopimelate + H2O = (2S,6S)-2,6-diaminopimelate + succinate. Its pathway is amino-acid biosynthesis; L-lysine biosynthesis via DAP pathway; LL-2,6-diaminopimelate from (S)-tetrahydrodipicolinate (succinylase route): step 3/3. Functionally, catalyzes the hydrolysis of N-succinyl-L,L-diaminopimelic acid (SDAP), forming succinate and LL-2,6-diaminopimelate (DAP), an intermediate involved in the bacterial biosynthesis of lysine and meso-diaminopimelic acid, an essential component of bacterial cell walls. The polypeptide is Succinyl-diaminopimelate desuccinylase (Aeromonas salmonicida (strain A449)).